We begin with the raw amino-acid sequence, 730 residues long: Polyribonucleotide nucleotidyltransferase (730 aa).

Residues Asp-494 and Asp-500 each coordinate Mg(2+). In terms of domain architecture, KH spans 561-622 (PRIQTIQIDP…EAMNRAIQEI (62 aa)). The 70-residue stretch at 642-711 (GKIYTGRVTG…RSGKVRLSRK (70 aa)) folds into the S1 motif domain.

It belongs to the polyribonucleotide nucleotidyltransferase family. Requires Mg(2+) as cofactor.

The protein resides in the cytoplasm. The enzyme catalyses RNA(n+1) + phosphate = RNA(n) + a ribonucleoside 5'-diphosphate. Involved in mRNA degradation. Catalyzes the phosphorolysis of single-stranded polyribonucleotides processively in the 3'- to 5'-direction. The polypeptide is Polyribonucleotide nucleotidyltransferase (Opitutus terrae (strain DSM 11246 / JCM 15787 / PB90-1)).